Here is a 154-residue protein sequence, read N- to C-terminus: 6,7-dimethyl-8-ribityllumazine synthase (154 aa).

Residues W22, 56–58, and 80–82 contribute to the 5-amino-6-(D-ribitylamino)uracil site; these read AWE and CVI. 85-86 contributes to the (2S)-2-hydroxy-3-oxobutyl phosphate binding site; it reads DT. The active-site Proton donor is the H88. Position 113 (N113) interacts with 5-amino-6-(D-ribitylamino)uracil. R127 lines the (2S)-2-hydroxy-3-oxobutyl phosphate pocket.

Belongs to the DMRL synthase family. Forms an icosahedral capsid composed of 60 subunits, arranged as a dodecamer of pentamers.

The catalysed reaction is (2S)-2-hydroxy-3-oxobutyl phosphate + 5-amino-6-(D-ribitylamino)uracil = 6,7-dimethyl-8-(1-D-ribityl)lumazine + phosphate + 2 H2O + H(+). It functions in the pathway cofactor biosynthesis; riboflavin biosynthesis; riboflavin from 2-hydroxy-3-oxobutyl phosphate and 5-amino-6-(D-ribitylamino)uracil: step 1/2. Its function is as follows. Catalyzes the formation of 6,7-dimethyl-8-ribityllumazine by condensation of 5-amino-6-(D-ribitylamino)uracil with 3,4-dihydroxy-2-butanone 4-phosphate. This is the penultimate step in the biosynthesis of riboflavin. The sequence is that of 6,7-dimethyl-8-ribityllumazine synthase from Xanthomonas oryzae pv. oryzae (strain MAFF 311018).